A 396-amino-acid polypeptide reads, in one-letter code: tRNA-specific 2-thiouridylase MnmA (396 aa).

Residues 35–42 (GLSGGVDS) and L61 each bind ATP. The active-site Nucleophile is C122. A disulfide bridge connects residues C122 and C221. G147 is an ATP binding site. An interaction with tRNA region spans residues 171–173 (KDQ). C221 acts as the Cysteine persulfide intermediate in catalysis. The tract at residues 326-327 (RY) is interaction with tRNA.

Belongs to the MnmA/TRMU family.

Its subcellular location is the cytoplasm. It catalyses the reaction S-sulfanyl-L-cysteinyl-[protein] + uridine(34) in tRNA + AH2 + ATP = 2-thiouridine(34) in tRNA + L-cysteinyl-[protein] + A + AMP + diphosphate + H(+). Functionally, catalyzes the 2-thiolation of uridine at the wobble position (U34) of tRNA, leading to the formation of s(2)U34. The protein is tRNA-specific 2-thiouridylase MnmA of Parasynechococcus marenigrum (strain WH8102).